The primary structure comprises 213 residues: Na(+)-translocating NADH-quinone reductase subunit D (213 aa).

The next 7 helical transmembrane spans lie at 21–41 (PLIAILGICSALAVTTTVNTA), 42–62 (LTMGLAVSFVTGCSSFFVSLL), 77–97 (IIISLFVIVIDQFLKAFFFDI), 101–121 (LSVFVGLIITNCIVMGRAESL), 131–151 (FLDGFASGLGYGWVLVTVSII), 153–173 (EFFGFGTILGLQLIPKCFYAS), and 183–203 (FGLMVLAPSAFFLLGIMIWGV).

It belongs to the NqrDE/RnfAE family. Composed of six subunits; NqrA, NqrB, NqrC, NqrD, NqrE and NqrF.

It is found in the cell inner membrane. It catalyses the reaction a ubiquinone + n Na(+)(in) + NADH + H(+) = a ubiquinol + n Na(+)(out) + NAD(+). NQR complex catalyzes the reduction of ubiquinone-1 to ubiquinol by two successive reactions, coupled with the transport of Na(+) ions from the cytoplasm to the periplasm. NqrA to NqrE are probably involved in the second step, the conversion of ubisemiquinone to ubiquinol. This Chlamydia abortus (strain DSM 27085 / S26/3) (Chlamydophila abortus) protein is Na(+)-translocating NADH-quinone reductase subunit D.